The following is a 183-amino-acid chain: NRR repressor homolog 1 (183 aa).

2 disordered regions span residues 1 to 40 and 66 to 183; these read MEGV…VVGG and NGEE…PTDQ. A compositionally biased stretch (acidic residues) spans 31–40; sequence EEEEGAVVGG. Gly residues predominate over residues 70–79; the sequence is GAAGGDGDGA. Positions 101 to 115 are enriched in acidic residues; sequence FEFEEAAAGAGDDDA. Over residues 135–145 the composition is skewed to basic and acidic residues; the sequence is AVEKRRTEKEA. The segment covering 150–161 has biased composition (acidic residues); sequence AEDDDDEQEGGE. Basic and acidic residues predominate over residues 163 to 183; the sequence is VEGKEEHRPGRRVEAHGPTDQ.

Belongs to the NPR1-interactor family. In terms of assembly, interacts with NPR1/NH1. Interacts with NPR3/NH3.

Its subcellular location is the nucleus. In terms of biological role, binds to and represses NPR1/NH1-mediated transcriptional activation of LG2 in vitro. The protein is NRR repressor homolog 1 of Oryza sativa subsp. japonica (Rice).